Consider the following 443-residue polypeptide: Threonine/serine transporter TdcC (443 aa).

Transmembrane regions (helical) follow at residues 22-42, 44-64, 97-117, 140-160, 163-183, 207-227, 259-279, 319-339, 366-386, 389-409, and 423-443; these read TTWT…FFPI, AGFG…PIAF, GVVI…IYGV, VVAL…KDLM, VMSY…LSLI, ILVT…FSPI, ASML…FTLS, ASII…LGTL, ISMI…PNIL, IEAM…MYAI, and DNVF…YKLF.

It belongs to the amino acid/polyamine transporter 2 family. SdaC/TdcC subfamily.

It is found in the cell inner membrane. The enzyme catalyses L-threonine(in) + H(+)(in) = L-threonine(out) + H(+)(out). It catalyses the reaction L-serine(in) + H(+)(in) = L-serine(out) + H(+)(out). Its function is as follows. Involved in the import of threonine and serine into the cell, with the concomitant import of a proton (symport system). The protein is Threonine/serine transporter TdcC of Salmonella arizonae (strain ATCC BAA-731 / CDC346-86 / RSK2980).